The chain runs to 312 residues: Copper chaperone for superoxide dismutase, chloroplastic (312 aa).

The transit peptide at 1–78 (MVGFLRALTA…AAAAATADLS (78 aa)) directs the protein to the chloroplast. The HMA domain maps to 89–152 (ELMTEFMVDM…TLHQTGRDAR (64 aa)). Cu cation-binding residues include C100, C103, C301, and C303.

This sequence in the C-terminal section; belongs to the Cu-Zn superoxide dismutase family. The cofactor is Cu(2+).

It is found in the plastid. Its subcellular location is the chloroplast. Its function is as follows. Copper chaperone for superoxide dismutases (SODs). Binds copper ions and delivers them specifically to SODs. Is required for assistance in SODs disulfide bond formation and thereby activation of SODs. This is Copper chaperone for superoxide dismutase, chloroplastic (CCS) from Oryza sativa subsp. japonica (Rice).